Here is a 111-residue protein sequence, read N- to C-terminus: MTLSLNTPPGVHCQPLKHQRIPLLQLQLKSQPKSQLKSQPNKVLALKLLPPTLVPLLRLCQLPVLCWLVLPLYCCNLLNLFFNIFLEKWLSTFPSIQLPQNRFISINKIFW.

A helical membrane pass occupies residues 64-86 (VLCWLVLPLYCCNLLNLFFNIFL).

The protein resides in the membrane. This is an uncharacterized protein from Saccharomyces cerevisiae (strain ATCC 204508 / S288c) (Baker's yeast).